We begin with the raw amino-acid sequence, 417 residues long: D-glycerate 2-kinase (417 aa).

Belongs to the glycerate kinase type-1 family. As to quaternary structure, homodimer. It depends on Mg(2+) as a cofactor.

The enzyme catalyses (R)-glycerate + ATP = (2R)-2-phosphoglycerate + ADP + H(+). Involved in the degradation of serine via 3-hydroxypyruvate. Catalyzes the ATP-dependent phosphorylation of D-glycerate to 2-phosphoglycerate. The protein is D-glycerate 2-kinase of Thermotoga maritima (strain ATCC 43589 / DSM 3109 / JCM 10099 / NBRC 100826 / MSB8).